Here is a 208-residue protein sequence, read N- to C-terminus: MALGQKLFITMSRGAGRLQGTLWALVFLGILVGMVVPSPAGTRANNTLLDSRGWGTLLSRSRAGLAGEIAGVNWESGYLVGIKRQRRLYCNVGIGFHLQVLPDGRISGTHEENPYSLLEISTVERGVVSLFGVRSALFVAMNSKGRLYATPSFQEECKFRETLLPNNYNAYESDLYQGTYIALSKYGRVKRGSKVSPIMTVTHFLPRI.

A signal peptide spans 1-37 (MALGQKLFITMSRGAGRLQGTLWALVFLGILVGMVVP). An N-linked (GlcNAc...) asparagine glycan is attached at Asn45. A disulfide bridge connects residues Cys90 and Cys157.

The protein belongs to the heparin-binding growth factors family. Interacts with FGFR1, FGFR2 and FGFR4. Affinity between fibroblast growth factors (FGFs) and their receptors is increased by heparan sulfate glycosaminoglycans that function as coreceptors. In terms of tissue distribution, leukemia cell lines with platelet/ megakaryocytic differentiation potential.

The protein resides in the secreted. Its subcellular location is the extracellular space. In terms of biological role, plays an important role in the regulation of cell proliferation, cell differentiation, angiogenesis and myogenesis, and is required for normal muscle regeneration. The chain is Fibroblast growth factor 6 (FGF6) from Homo sapiens (Human).